A 140-amino-acid polypeptide reads, in one-letter code: Nucleoside diphosphate kinase (140 aa).

6 residues coordinate ATP: lysine 11, phenylalanine 59, arginine 87, threonine 93, arginine 104, and asparagine 114. Histidine 117 serves as the catalytic Pros-phosphohistidine intermediate.

It belongs to the NDK family. As to quaternary structure, homotetramer. The cofactor is Mg(2+).

It localises to the cytoplasm. It catalyses the reaction a 2'-deoxyribonucleoside 5'-diphosphate + ATP = a 2'-deoxyribonucleoside 5'-triphosphate + ADP. It carries out the reaction a ribonucleoside 5'-diphosphate + ATP = a ribonucleoside 5'-triphosphate + ADP. Its function is as follows. Major role in the synthesis of nucleoside triphosphates other than ATP. The ATP gamma phosphate is transferred to the NDP beta phosphate via a ping-pong mechanism, using a phosphorylated active-site intermediate. This chain is Nucleoside diphosphate kinase, found in Rhizobium etli (strain ATCC 51251 / DSM 11541 / JCM 21823 / NBRC 15573 / CFN 42).